The chain runs to 239 residues: DUP240 protein DFP3 (239 aa).

Residues 1–54 (MQPHLDNNSNNDDVKLDTLGEQNVLSSAENITLPEDTFKSYMTYLLYEMAHYKP) lie on the Cytoplasmic side of the membrane. The chain crosses the membrane as a helical span at residues 55–75 (MIFSFLALSVSILIVVIFHNV). The Extracellular portion of the chain corresponds to 76–79 (KACD). Residues 80–104 (VVFGFSIFVTSILFLSTLIPFNVYI) form a helical membrane-spanning segment. Residues 105–239 (SDEGFRIKLL…RKQYPDADIP (135 aa)) lie on the Cytoplasmic side of the membrane.

The protein belongs to the DUP/COS family. Interacts according to large scale protein interaction studies with MEC3 and ULP1.

It localises to the membrane. The protein is DUP240 protein DFP3 of Saccharomyces cerevisiae (strain ATCC 204508 / S288c) (Baker's yeast).